The sequence spans 244 residues: tRNA (guanine-N(1)-)-methyltransferase (244 aa).

Residues Gly120 and 140-145 (IGDYIL) contribute to the S-adenosyl-L-methionine site.

Belongs to the RNA methyltransferase TrmD family. In terms of assembly, homodimer.

The protein resides in the cytoplasm. The catalysed reaction is guanosine(37) in tRNA + S-adenosyl-L-methionine = N(1)-methylguanosine(37) in tRNA + S-adenosyl-L-homocysteine + H(+). Functionally, specifically methylates guanosine-37 in various tRNAs. In Brucella canis (strain ATCC 23365 / NCTC 10854 / RM-666), this protein is tRNA (guanine-N(1)-)-methyltransferase.